Consider the following 76-residue polypeptide: Omega-scoloptoxin(15)-Ssd3c (76 aa).

The N-terminal stretch at 1-23 (MEKKIIFLVVLVALLALPEFISS) is a signal peptide.

This sequence belongs to the scoloptoxin-15 family. In terms of processing, contains 2 disulfide bonds. Expressed by the venom gland.

It localises to the secreted. Its function is as follows. Voltage-gated calcium channel inhibitor (Cav) (8.6% block at 10 nM), when tested on DRG neurons. The protein is Omega-scoloptoxin(15)-Ssd3c of Scolopendra dehaani (Thai centipede).